The primary structure comprises 245 residues: tRNA (guanine-N(7)-)-methyltransferase (245 aa).

S-adenosyl-L-methionine contacts are provided by Glu75, Glu100, Asp127, and Asp149. Asp149 is a catalytic residue. Residues Lys153, Asp185, and 222–225 (TKFE) each bind substrate.

Belongs to the class I-like SAM-binding methyltransferase superfamily. TrmB family.

It carries out the reaction guanosine(46) in tRNA + S-adenosyl-L-methionine = N(7)-methylguanosine(46) in tRNA + S-adenosyl-L-homocysteine. The protein operates within tRNA modification; N(7)-methylguanine-tRNA biosynthesis. Catalyzes the formation of N(7)-methylguanine at position 46 (m7G46) in tRNA. The polypeptide is tRNA (guanine-N(7)-)-methyltransferase (Acinetobacter baylyi (strain ATCC 33305 / BD413 / ADP1)).